The following is a 508-amino-acid chain: Methionine--tRNA ligase (508 aa).

Residues 12-22 carry the 'HIGH' region motif; the sequence is YYVNDVAHIGH. The 'KMSKS' region motif lies at 295 to 299; the sequence is KISKS. Residue Lys-298 participates in ATP binding.

The protein belongs to the class-I aminoacyl-tRNA synthetase family. MetG type 2B subfamily. Monomer.

It localises to the cytoplasm. It catalyses the reaction tRNA(Met) + L-methionine + ATP = L-methionyl-tRNA(Met) + AMP + diphosphate. Functionally, is required not only for elongation of protein synthesis but also for the initiation of all mRNA translation through initiator tRNA(fMet) aminoacylation. This is Methionine--tRNA ligase (metG) from Rickettsia prowazekii (strain Madrid E).